The primary structure comprises 132 residues: Small ribosomal subunit protein uS8c (132 aa).

Belongs to the universal ribosomal protein uS8 family. In terms of assembly, part of the 30S ribosomal subunit.

It is found in the plastid. Its subcellular location is the chloroplast. In terms of biological role, one of the primary rRNA binding proteins, it binds directly to 16S rRNA central domain where it helps coordinate assembly of the platform of the 30S subunit. This is Small ribosomal subunit protein uS8c (rps8) from Liriodendron tulipifera (Tuliptree).